We begin with the raw amino-acid sequence, 447 residues long: Cysteine--tRNA ligase (447 aa).

A Zn(2+)-binding site is contributed by Cys28. A 'HIGH' region motif is present at residues 30-40 (PTVYNYIHIGN). Positions 211, 236, and 240 each coordinate Zn(2+). Positions 268-272 (KMSKS) match the 'KMSKS' region motif. Lys271 lines the ATP pocket.

The protein belongs to the class-I aminoacyl-tRNA synthetase family. As to quaternary structure, monomer. Zn(2+) serves as cofactor.

It localises to the cytoplasm. The catalysed reaction is tRNA(Cys) + L-cysteine + ATP = L-cysteinyl-tRNA(Cys) + AMP + diphosphate. The protein is Cysteine--tRNA ligase of Streptococcus agalactiae serotype III (strain NEM316).